Consider the following 391-residue polypeptide: uncharacterized protein (391 aa).

Residues 4–24 (FALIVGIVALAIFSFLYIQLY) form a helical membrane-spanning segment.

The protein resides in the membrane. This is an uncharacterized protein from Haemophilus influenzae (strain ATCC 51907 / DSM 11121 / KW20 / Rd).